A 198-amino-acid polypeptide reads, in one-letter code: MKVTKAEIVISAVRPDQYPGGDLPEIALAGRSNVGKSSFINTILNRKKLVRISSKPGKTQTLNFFIINDMMHFVDVPGYGYAKVSKSERAAWGKMIETYFTTREQLDATVLVIDLRHPPTKDDVMMYDFLKHYEIPTIIIATKADKIPKGKWQKHLKVVKETLDVEAGDEVVLFSSETGLGKEEAWKAIHKFTKTKNA.

One can recognise an EngB-type G domain in the interval 22–195; that stretch reads DLPEIALAGR…WKAIHKFTKT (174 aa). GTP contacts are provided by residues 30 to 37, 57 to 61, 75 to 78, 142 to 145, and 174 to 176; these read GRSNVGKS, GKTQT, DVPG, TKAD, and FSS. 2 residues coordinate Mg(2+): S37 and T59.

Belongs to the TRAFAC class TrmE-Era-EngA-EngB-Septin-like GTPase superfamily. EngB GTPase family. It depends on Mg(2+) as a cofactor.

Its function is as follows. Necessary for normal cell division and for the maintenance of normal septation. The protein is Probable GTP-binding protein EngB of Bacillus cytotoxicus (strain DSM 22905 / CIP 110041 / 391-98 / NVH 391-98).